Here is a 79-residue protein sequence, read N- to C-terminus: uncharacterized protein (79 aa).

The protein belongs to the asfivirus D79L family.

This is an uncharacterized protein from Ornithodoros (relapsing fever ticks).